Consider the following 290-residue polypeptide: uncharacterized protein (290 aa).

Disordered regions lie at residues Q17 to S91 and D220 to N259. Polar residues predominate over residues N40 to L50. Basic residues predominate over residues S66–K83. Residues E233–Q249 are compositionally biased toward basic and acidic residues.

This is an uncharacterized protein from Saccharomyces cerevisiae (strain ATCC 204508 / S288c) (Baker's yeast).